A 561-amino-acid chain; its full sequence is Transmembrane protein 209 (561 aa).

Residue serine 11 is modified to Phosphoserine. The helical transmembrane segment at 28 to 48 (VVLAWGLLNVSMAGMIYTEMT) threads the bilayer. An N-linked (GlcNAc...) asparagine glycan is attached at asparagine 57. Residues 60–80 (YWPLWYIELALASLFSLNALF) traverse the membrane as a helical segment. Serine 98 carries the post-translational modification Phosphoserine. Disordered stretches follow at residues 120–156 (LAAT…KFAT) and 200–232 (SSPY…PTDK). The segment covering 138–152 (SVLSYSPSRSPSTSP) has biased composition (low complexity). Phosphoserine occurs at positions 201 and 248. The tract at residues 250–270 (EEKQHRVKLGSPDSTSPSTSP) is disordered. The span at 260-270 (SPDSTSPSTSP) shows a compositional bias: low complexity. A glycan (N-linked (GlcNAc...) asparagine) is linked at asparagine 274. Position 278 is a phosphoserine (serine 278).

As to quaternary structure, interacts with NUP205.

The protein localises to the membrane. It is found in the nucleus envelope. Its subcellular location is the golgi apparatus. It localises to the cytoplasm. Its function is as follows. Nuclear envelope protein which in association with NUP205, may be involved in nuclear transport of various nuclear proteins in addition to MYC. This chain is Transmembrane protein 209 (Tmem209), found in Mus musculus (Mouse).